Here is a 60-residue protein sequence, read N- to C-terminus: Large ribosomal subunit protein uL30 (60 aa).

This sequence belongs to the universal ribosomal protein uL30 family. As to quaternary structure, part of the 50S ribosomal subunit.

This is Large ribosomal subunit protein uL30 from Agathobacter rectalis (strain ATCC 33656 / DSM 3377 / JCM 17463 / KCTC 5835 / VPI 0990) (Eubacterium rectale).